Consider the following 153-residue polypeptide: Small ribosomal subunit protein uS9 (153 aa).

Positions 1–19 are enriched in low complexity; it reads MTAPADEAPAVEDAPVAED. Disordered stretches follow at residues 1-23 and 121-153; these read MTAP…IAPV and LKKA…YSKR. The span at 129 to 138 shows a compositional bias: basic and acidic residues; sequence RDSREKERKK. Basic residues predominate over residues 139-153; that stretch reads YGLKKARKAPQYSKR.

This sequence belongs to the universal ribosomal protein uS9 family.

The chain is Small ribosomal subunit protein uS9 from Saccharopolyspora erythraea (strain ATCC 11635 / DSM 40517 / JCM 4748 / NBRC 13426 / NCIMB 8594 / NRRL 2338).